The primary structure comprises 403 residues: Argininosuccinate synthase (403 aa).

10-18 (AYSGGLDTS) contacts ATP. Tyr-87 is an L-citrulline binding site. Gly-117 contributes to the ATP binding site. L-aspartate-binding residues include Thr-119, Asn-123, and Asp-124. Asn-123 is a binding site for L-citrulline. Arg-127, Ser-175, Ser-184, Glu-260, and Tyr-272 together coordinate L-citrulline.

This sequence belongs to the argininosuccinate synthase family. Type 1 subfamily. In terms of assembly, homotetramer.

It localises to the cytoplasm. The catalysed reaction is L-citrulline + L-aspartate + ATP = 2-(N(omega)-L-arginino)succinate + AMP + diphosphate + H(+). Its pathway is amino-acid biosynthesis; L-arginine biosynthesis; L-arginine from L-ornithine and carbamoyl phosphate: step 2/3. The polypeptide is Argininosuccinate synthase (Bacillus pumilus (strain SAFR-032)).